The primary structure comprises 569 residues: Endonuclease/exonuclease/phosphatase family domain-containing protein 1 (569 aa).

The interval 1 to 20 (MGSTLGCHRSIPRDPSDLSH) is disordered. Gly-2 carries N-myristoyl glycine lipidation. The segment covering 11-20 (IPRDPSDLSH) has biased composition (basic and acidic residues). Ser-16, Ser-21, and Ser-25 each carry phosphoserine. Positions 38–67 (ERLNINTATEEELMTLPGVTRAVARSIVEY) constitute a HhH domain. Residues Ser-106, Ser-110, Ser-160, and Ser-173 each carry the phosphoserine modification. The tract at residues 200–225 (SRPPSTHTNGGLTFTAKPHPSPTSLS) is disordered. A compositionally biased stretch (polar residues) spans 202-211 (PPSTHTNGGL). Position 265 is a phosphothreonine (Thr-265). Ser-428 bears the Phosphoserine mark. The segment at 545 to 569 (SKKDAPRNGSGVALERSEANIKHER) is disordered. Residues 559–569 (ERSEANIKHER) are compositionally biased toward basic and acidic residues.

In Homo sapiens (Human), this protein is Endonuclease/exonuclease/phosphatase family domain-containing protein 1 (EEPD1).